A 341-amino-acid polypeptide reads, in one-letter code: Ribosomal RNA small subunit methyltransferase H (341 aa).

S-adenosyl-L-methionine is bound by residues 47–49 (GGY), aspartate 64, phenylalanine 91, aspartate 109, and glutamine 116.

The protein belongs to the methyltransferase superfamily. RsmH family.

The protein localises to the cytoplasm. The catalysed reaction is cytidine(1402) in 16S rRNA + S-adenosyl-L-methionine = N(4)-methylcytidine(1402) in 16S rRNA + S-adenosyl-L-homocysteine + H(+). Its function is as follows. Specifically methylates the N4 position of cytidine in position 1402 (C1402) of 16S rRNA. The chain is Ribosomal RNA small subunit methyltransferase H from Sinorhizobium medicae (strain WSM419) (Ensifer medicae).